The sequence spans 179 residues: Putative manganese efflux pump MntP (179 aa).

A run of 6 helical transmembrane segments spans residues 4-24 (VLIL…GLGI), 39-59 (LFFG…GIGL), 69-89 (IVAF…AFNE), 102-122 (ILLT…YSLH), 128-148 (IYLS…IGVY), and 159-179 (SKAE…ILLF).

This sequence belongs to the MntP (TC 9.B.29) family.

The protein resides in the cell inner membrane. In terms of biological role, probably functions as a manganese efflux pump. The protein is Putative manganese efflux pump MntP of Aliarcobacter butzleri (strain RM4018) (Arcobacter butzleri).